Here is a 225-residue protein sequence, read N- to C-terminus: PKHD-type hydroxylase YbiX (225 aa).

One can recognise a Fe2OG dioxygenase domain in the interval 78-177 (TLSTPLFNRY…RVASFMWIQS (100 aa)). Residues His-96, Asp-98, and His-158 each contribute to the Fe cation site. Arg-168 provides a ligand contact to 2-oxoglutarate.

Fe(2+) serves as cofactor. It depends on L-ascorbate as a cofactor.

In Escherichia coli (strain 55989 / EAEC), this protein is PKHD-type hydroxylase YbiX.